Consider the following 489-residue polypeptide: Cytochrome P450 2C70 (489 aa).

The signal sequence occupies residues Met-1–Arg-27. Position 434 (Cys-434) interacts with heme.

The protein belongs to the cytochrome P450 family. Requires heme as cofactor.

The protein localises to the endoplasmic reticulum membrane. It localises to the microsome membrane. The enzyme catalyses chenodeoxycholate + reduced [NADPH--hemoprotein reductase] + O2 = alpha-muricholate + oxidized [NADPH--hemoprotein reductase] + H2O + H(+). The catalysed reaction is ursodeoxycholate + reduced [NADPH--hemoprotein reductase] + O2 = beta-muricholate + oxidized [NADPH--hemoprotein reductase] + H2O + H(+). In terms of biological role, a cytochrome P450 monooxygenase involved in muricholic acid (MCA) synthesis. Hydroxylates at the 6-beta position two major bile acids, chenodeoxycholic acid (CDCA) and ursodeoxycholic acid (UDCA) to form alpha-MCA and beta-MCA, respectively. May regulate NR1H4/farnesoid X receptor signaling, as taurine-conjugated MCAs are antagonists of NR1H4. Mechanistically, uses molecular oxygen inserting one oxygen atom into a substrate, and reducing the second into a water molecule, with two electrons provided by NADPH via cytochrome P450 reductase (CPR; NADPH-ferrihemoprotein reductase). This chain is Cytochrome P450 2C70, found in Rattus norvegicus (Rat).